The following is a 353-amino-acid chain: Phosphate acyltransferase (353 aa).

Belongs to the PlsX family. In terms of assembly, homodimer. Probably interacts with PlsY.

It localises to the cytoplasm. It carries out the reaction a fatty acyl-[ACP] + phosphate = an acyl phosphate + holo-[ACP]. Its pathway is lipid metabolism; phospholipid metabolism. Catalyzes the reversible formation of acyl-phosphate (acyl-PO(4)) from acyl-[acyl-carrier-protein] (acyl-ACP). This enzyme utilizes acyl-ACP as fatty acyl donor, but not acyl-CoA. This Bradyrhizobium sp. (strain BTAi1 / ATCC BAA-1182) protein is Phosphate acyltransferase.